The sequence spans 334 residues: MAKIAINGFGRIGRLALRRILEVPGLEVVAINDLTDAKMLAHLFKYDSSQGRFNGEIEVKEGAFVVNGKEVKVFAEADPEKLPWGDLGIDVVLECTGFFTKKEKAEAHVRAGAKKVVISAPAGNDLKTIVFNVNNEDLDGTETVISGASCTTNCLAPMAKVLNDKFGIEKGFMTTIHAFTNDQNTLDGPHRKGDLRRARAAAVSIIPNSTGAAKAISQVIPDLAGKLDGNAQRVPVPTGSITELVSVLKKKVTVEEINAAMKEAADESFGYTEDPIVSADVVGINYGSLFDATLTKIVDVNGSQLVKTAAWYDNEMSYTSQLVRTLAYFAKIAK.

Residues R11–I12, D33, and S119 each bind NAD(+). D-glyceraldehyde 3-phosphate is bound by residues S149–T151 and T180. The active-site Nucleophile is C150. Position 181 (N181) interacts with NAD(+). Residues R197, T210–G211, and R233 contribute to the D-glyceraldehyde 3-phosphate site. Residue N314 coordinates NAD(+).

It belongs to the glyceraldehyde-3-phosphate dehydrogenase family. Homotetramer.

Its subcellular location is the cytoplasm. It carries out the reaction D-glyceraldehyde 3-phosphate + phosphate + NAD(+) = (2R)-3-phospho-glyceroyl phosphate + NADH + H(+). It participates in carbohydrate degradation; glycolysis; pyruvate from D-glyceraldehyde 3-phosphate: step 1/5. In terms of biological role, catalyzes the oxidative phosphorylation of glyceraldehyde 3-phosphate (G3P) to 1,3-bisphosphoglycerate (BPG) using the cofactor NAD. The first reaction step involves the formation of a hemiacetal intermediate between G3P and a cysteine residue, and this hemiacetal intermediate is then oxidized to a thioester, with concomitant reduction of NAD to NADH. The reduced NADH is then exchanged with the second NAD, and the thioester is attacked by a nucleophilic inorganic phosphate to produce BPG. The polypeptide is Glyceraldehyde-3-phosphate dehydrogenase (gap) (Clostridium acetobutylicum (strain ATCC 824 / DSM 792 / JCM 1419 / IAM 19013 / LMG 5710 / NBRC 13948 / NRRL B-527 / VKM B-1787 / 2291 / W)).